A 288-amino-acid chain; its full sequence is MILLALPNKGRISKPVNEILEKSGLKISVHGRSLFAQTVDPEIKVMFARAKDIPEFVRDGVADVGVTGYDLMLERDTEEELEMLLDFKFGNARLVIAAPENSSVNSIDDVKDGMKIATEFPGLTKRYLEKKGLNLEIIELSGATEIAPFIGVSDLICDLTSTGTTLQLNRLKEVENVVSSTTRLVANKKSMENPEKCVKINQVLSGIKSVLYAQSKRLIMMNAPKDKVSEITSIIPGMGGPTVSEILSNDKMLAINAVIDENKVFETVTNLERLGARDILVVPIERIL.

Belongs to the ATP phosphoribosyltransferase family. Long subfamily. Mg(2+) serves as cofactor.

Its subcellular location is the cytoplasm. It carries out the reaction 1-(5-phospho-beta-D-ribosyl)-ATP + diphosphate = 5-phospho-alpha-D-ribose 1-diphosphate + ATP. It participates in amino-acid biosynthesis; L-histidine biosynthesis; L-histidine from 5-phospho-alpha-D-ribose 1-diphosphate: step 1/9. Feedback inhibited by histidine. Catalyzes the condensation of ATP and 5-phosphoribose 1-diphosphate to form N'-(5'-phosphoribosyl)-ATP (PR-ATP). Has a crucial role in the pathway because the rate of histidine biosynthesis seems to be controlled primarily by regulation of HisG enzymatic activity. In Methanococcus maripaludis (strain C6 / ATCC BAA-1332), this protein is ATP phosphoribosyltransferase.